The chain runs to 261 residues: Short-chain dehydrogenase/reductase ARMGADRAFT_1018421 (261 aa).

Positions 21, 68, 95, 128, 161, 165, 194, and 196 each coordinate NADP(+). Tyr161 serves as the catalytic Proton acceptor. Lys165 functions as the Lowers pKa of active site Tyr in the catalytic mechanism.

Belongs to the short-chain dehydrogenases/reductases (SDR) family.

It functions in the pathway secondary metabolite biosynthesis. Short-chain dehydrogenase/reductase, part of the gene cluster that mediates the biosynthesis of melleolides, a range of antifungal and phytotoxic polyketide derivatives composed of an orsellinic acid (OA) moiety esterified to various sesquiterpene alcohols. The first step in melleolides biosynthesis is performed by the delta(6)-protoilludene synthase PRO1 which catalyzes the cyclization of farnesyl diphosphate to protoilludene. The orsellinic acid synthase armB produces OA by condensing acetyl-CoA with 3 malonyl-CoA units in a three-round chain elongation reaction folowed by a C2-C7 ring closure. ArmB further catalyzes the trans-esterification of OA to the various sesquiterpene alcohols resulting from the hydroxylation of protoilludene. The melleolides cluster also includes 5 cytochrome P450 monooxygenases, 4 NAD(+)-dependent oxidoreductases, one flavin-dependent oxidoreductase, and one O-methyltransferase. The cytochrome P450 monooxygenases may be involved in protoilludene hydroxylation to elaborate melleolides with multiple alcohol groups, such as melleolide D, which carries alcohol functionalities at C-4, C-5, C-10, and C-13. The role of the NAD(+)-dependent enzymes remains unknown. Numerous melleolides, including arnamial, show 5'-O-methylation of the aromatic moiety which may be catalyzed by the methyltransferase encoded in the cluster. The flavin-dependent oxidoreductase might represent the dehydrogenase yielding the aldehyde in position 1 of arnamial and other melleolides. Finally, several halogenase localized outside of the cluster, are able to catalyze the transfer of a single chlorine atom to the melleolide backbone, resulting in a 6'-chloromelleolide product. The polypeptide is Short-chain dehydrogenase/reductase ARMGADRAFT_1018421 (Armillaria gallica (Bulbous honey fungus)).